The following is a 231-amino-acid chain: Probable glutathione S-transferase GSTU1 (231 aa).

The region spanning 5 to 84 (KELVLLDFWV…YLDDAFPGTP (80 aa)) is the GST N-terminal domain. Glutathione is bound by residues Ser15, Lys42, Ile56, and 68–69 (ES). Residues 97–220 (AAYARATARF…LPSPEKVYDF (124 aa)) enclose the GST C-terminal domain.

Belongs to the GST superfamily. Tau family.

The catalysed reaction is RX + glutathione = an S-substituted glutathione + a halide anion + H(+). Conjugation of reduced glutathione to a wide number of exogenous and endogenous hydrophobic electrophiles. This Oryza sativa subsp. japonica (Rice) protein is Probable glutathione S-transferase GSTU1 (GSTU1).